The following is a 166-amino-acid chain: Cyanate hydratase (166 aa).

Catalysis depends on residues R92, E95, and S118.

It belongs to the cyanase family.

The catalysed reaction is cyanate + hydrogencarbonate + 3 H(+) = NH4(+) + 2 CO2. In terms of biological role, catalyzes the reaction of cyanate with bicarbonate to produce ammonia and carbon dioxide. The chain is Cyanate hydratase from Zea mays (Maize).